The chain runs to 66 residues: Large ribosomal subunit protein bL33 (66 aa).

Belongs to the bacterial ribosomal protein bL33 family.

The sequence is that of Large ribosomal subunit protein bL33 from Synechococcus sp. (strain CC9902).